The following is a 241-amino-acid chain: Methylthioribulose-1-phosphate dehydratase (241 aa).

Cys96 serves as a coordination point for substrate. Positions 114 and 116 each coordinate Zn(2+). The active-site Proton donor/acceptor is Glu138. His194 is a Zn(2+) binding site.

The protein belongs to the aldolase class II family. MtnB subfamily. Homotetramer. Interacts with APAF1. May interact with CASP1. The cofactor is Zn(2+). Expressed in skeletal muscle (at protein level).

Its subcellular location is the cytoplasm. The enzyme catalyses 5-(methylsulfanyl)-D-ribulose 1-phosphate = 5-methylsulfanyl-2,3-dioxopentyl phosphate + H2O. It functions in the pathway amino-acid biosynthesis; L-methionine biosynthesis via salvage pathway; L-methionine from S-methyl-5-thio-alpha-D-ribose 1-phosphate: step 2/6. Its function is as follows. Catalyzes the dehydration of methylthioribulose-1-phosphate (MTRu-1-P) into 2,3-diketo-5-methylthiopentyl-1-phosphate (DK-MTP-1-P). Functions in the methionine salvage pathway, which plays a key role in cancer, apoptosis, microbial proliferation and inflammation. May inhibit the CASP1-related inflammatory response (pyroptosis), the CASP9-dependent apoptotic pathway and the cytochrome c-dependent and APAF1-mediated cell death. This is Methylthioribulose-1-phosphate dehydratase from Mus musculus (Mouse).